The primary structure comprises 125 residues: Ribosome maturation factor RimP (125 aa).

Belongs to the RimP family.

It localises to the cytoplasm. In terms of biological role, required for maturation of 30S ribosomal subunits. In Rickettsia canadensis (strain McKiel), this protein is Ribosome maturation factor RimP.